Here is a 186-residue protein sequence, read N- to C-terminus: Imidazoleglycerol-phosphate dehydratase (186 aa).

The protein belongs to the imidazoleglycerol-phosphate dehydratase family.

It localises to the cytoplasm. It carries out the reaction D-erythro-1-(imidazol-4-yl)glycerol 3-phosphate = 3-(imidazol-4-yl)-2-oxopropyl phosphate + H2O. It participates in amino-acid biosynthesis; L-histidine biosynthesis; L-histidine from 5-phospho-alpha-D-ribose 1-diphosphate: step 6/9. The protein is Imidazoleglycerol-phosphate dehydratase of Pyrobaculum aerophilum (strain ATCC 51768 / DSM 7523 / JCM 9630 / CIP 104966 / NBRC 100827 / IM2).